Reading from the N-terminus, the 1043-residue chain is Unconventional myosin-Ia (1043 aa).

Residues 8–694 enclose the Myosin motor domain; it reads VGVEDLVLLE…TLFYLEEQRR (687 aa). 101-108 is an ATP binding site; it reads GESGSGKT. Positions 571–593 are actin-binding; sequence VAILMKNLYSKSPNYIRCIKPNE. 3 consecutive IQ domains span residues 697-719, 720-742, and 743-772; these read LQQLATLIQKIYRGWRCRTHYQL, MRKSQILISSWFRGNMQKKCYGK, and IKASVLLIQAFVRGWKARKNYRKYFRSEAA. The 185-residue stretch at 858–1042 folds into the TH1 domain; the sequence is KASYPQSVPI…KGSHCLEVTV (185 aa).

It belongs to the TRAFAC class myosin-kinesin ATPase superfamily. Myosin family. Post-translationally, phosphorylated by ALPK1.

Functionally, involved in directing the movement of organelles along actin filaments. The sequence is that of Unconventional myosin-Ia (MYO1A) from Homo sapiens (Human).